A 1077-amino-acid chain; its full sequence is Mitogen-activated protein kinase kinase kinase 9 (1077 aa).

The segment at 1–40 (MESSRSLLGCLASATAAPPGDDATGAGAEEEEDEEEAAAE) is disordered. The segment covering 14–27 (ATAAPPGDDATGAG) has biased composition (low complexity). The span at 28–38 (AEEEEDEEEAA) shows a compositional bias: acidic residues. The SH3 domain maps to 45–109 (AALPYWTAVF…PSNYVTPRSA (65 aa)). Positions 137–405 (LTLEEIIGIG…LTTIEESGFF (269 aa)) constitute a Protein kinase domain. ATP is bound by residues 143–151 (IGIGGFGKV) and Lys164. Asp261 (proton acceptor) is an active-site residue. Phosphothreonine; by autocatalysis is present on residues Thr297 and Thr298. Phosphoserine; by autocatalysis is present on Ser301. Thr305 carries the phosphothreonine; by autocatalysis modification. Leucine-zipper regions lie at residues 423 to 444 (IQEM…EEEL) and 458 to 479 (LRRR…ELNI). A compositionally biased stretch (basic residues) spans 491–503 (VKKRKGKFRKSRL). Disordered stretches follow at residues 491–511 (VKKR…GNRI), 526–606 (SPTM…TSGD), 646–713 (EDED…KRGG), 748–790 (LPPE…KKEE), 860–971 (RDPN…PRPS), and 986–1011 (SHAR…CFAS). Ser526 carries the phosphoserine modification. Polar residues-rich tracts occupy residues 559–568 (PGESSKTWGR) and 693–709 (PVNS…TNSL). A compositionally biased stretch (basic and acidic residues) spans 755-767 (PPAREEKKRREGL). The span at 863-880 (NQSLTPTHVTLTAPTQPS) shows a compositional bias: polar residues. Over residues 901-915 (GSRSPSSNGMSPSPG) the composition is skewed to low complexity. Polar residues predominate over residues 987–1011 (HARSASPANSSSTETPSNLDSCFAS).

Belongs to the protein kinase superfamily. STE Ser/Thr protein kinase family. MAP kinase kinase kinase subfamily. As to quaternary structure, homodimer. Mg(2+) serves as cofactor. Autophosphorylation on serine and threonine residues within the activation loop plays a role in enzyme activation. Thr-305 is likely to be the main autophosphorylation site. Autophosphorylation also occurs on Thr-297 and Ser-301. Expressed in cochlea and utricle.

It carries out the reaction L-seryl-[protein] + ATP = O-phospho-L-seryl-[protein] + ADP + H(+). It catalyses the reaction L-threonyl-[protein] + ATP = O-phospho-L-threonyl-[protein] + ADP + H(+). Homodimerization via the leucine zipper domains is required for autophosphorylation of multiple sites in the activation loop and subsequent activation. Autophosphorylation at Thr-305 is the key step in activation of MAP3K9/MLK1 and is required for full phosphorylation. Autophosphorylation at Thr-297 and Ser-301 have been shown to be of secondary importance in the activation of MAP3K9/MLK1. In terms of biological role, serine/threonine kinase which acts as an essential component of the MAP kinase signal transduction pathway. Plays an important role in the cascades of cellular responses evoked by changes in the environment. Once activated, acts as an upstream activator of the MKK/JNK signal transduction cascade through the phosphorylation of MAP2K4/MKK4 and MAP2K7/MKK7 which in turn activate the JNKs. The MKK/JNK signaling pathway regulates stress response via activator protein-1 (JUN) and GATA4 transcription factors. Also plays a role in mitochondrial death signaling pathway, including the release cytochrome c, leading to apoptosis. This Mus musculus (Mouse) protein is Mitogen-activated protein kinase kinase kinase 9 (Map3k9).